The following is a 180-amino-acid chain: Ribosome rescue factor SmrB (180 aa).

The Smr domain occupies 98–173 (LDLHGLTQLI…GDAALLLLVE (76 aa)).

This sequence belongs to the SmrB family. As to quaternary structure, associates with collided ribosomes, but not with correctly translating polysomes.

Acts as a ribosome collision sensor. Detects stalled/collided disomes (pairs of ribosomes where the leading ribosome is stalled and a second ribosome has collided with it) and endonucleolytically cleaves mRNA at the 5' boundary of the stalled ribosome. Stalled/collided disomes form a new interface (primarily via the 30S subunits) that binds SmrB. Cleaved mRNA becomes available for tmRNA ligation, leading to ribosomal subunit dissociation and rescue of stalled ribosomes. The chain is Ribosome rescue factor SmrB from Proteus mirabilis (strain HI4320).